We begin with the raw amino-acid sequence, 184 residues long: Uroplakin-2 (184 aa).

A signal peptide spans 1-25 (MASTLPVQTLPLILILLAVLAPGTA). Residues 26–84 (DFNISSLSGLLSPALTESLLIALPPCHLTGGNATLMVRRANDSKVVKSDFVVPPCRGRR) constitute a propeptide that is removed on maturation. Asn-28, Asn-57, and Asn-66 each carry an N-linked (GlcNAc...) asparagine glycan. The Lumenal segment spans residues 85-155 (ELVSVVDSGS…IGLGMARTGG (71 aa)). A helical transmembrane segment spans residues 156–180 (MVVITVLLSVAMFLLVVGLIVALHW). Over 181–184 (DARK) the chain is Cytoplasmic.

Belongs to the uroplakin-2 family. In terms of assembly, interacts with uroplakin-1a (UPK1A).

The protein localises to the cell membrane. Component of the asymmetric unit membrane (AUM); a highly specialized biomembrane elaborated by terminally differentiated urothelial cells. May play an important role in regulating the assembly of the AUM. The polypeptide is Uroplakin-2 (Upk2) (Mus musculus (Mouse)).